We begin with the raw amino-acid sequence, 70 residues long: DNA-directed RNA polymerase subunit epsilon (70 aa).

The protein belongs to the RNA polymerase subunit epsilon family. In terms of assembly, RNAP is composed of a core of 2 alpha, a beta and a beta' subunit. The core is associated with a delta subunit, and at least one of epsilon or omega. When a sigma factor is associated with the core the holoenzyme is formed, which can initiate transcription.

It carries out the reaction RNA(n) + a ribonucleoside 5'-triphosphate = RNA(n+1) + diphosphate. A non-essential component of RNA polymerase (RNAP). The chain is DNA-directed RNA polymerase subunit epsilon from Lacticaseibacillus casei (strain BL23) (Lactobacillus casei).